The primary structure comprises 160 residues: MTADVPNARLVDVELDESIGRSTPDVEHERAVAIFDLIEENSFHPVGDQKGGPYRLKLSLMESRLIFSITRENGDAVATHILSLTPLRRVVRDYFMICESYYQAIRSATPSKIEAIDMGRRGLHNEGSQTLQARLKGKIEVDFDTARRLFTLVCVLHWRG.

Belongs to the UPF0262 family.

This Brucella canis (strain ATCC 23365 / NCTC 10854 / RM-666) protein is UPF0262 protein BCAN_A0255.